We begin with the raw amino-acid sequence, 1159 residues long: WASH complex subunit 5 (1159 aa).

Belongs to the strumpellin family. In terms of assembly, component of the WASH core complex also described as WASH regulatory complex (SHRC) composed of WASH (WASHC1, WASH2P or WASH3P), WASHC2 (WASHC2A or WASHC2C), WASHC3, WASHC4 and WASHC5. The WASH core complex associates via WASHC2 with the F-actin-capping protein dimer (formed by CAPZA1, CAPZA2 or CAPZA3 and CAPZB) in a transient or substoichiometric manner which was initially described as WASH complex. Interacts with VCP, PI4K2A.

It localises to the cytoplasm. Its subcellular location is the cytosol. It is found in the endoplasmic reticulum. The protein resides in the early endosome. Acts as a component of the WASH core complex that functions as a nucleation-promoting factor (NPF) at the surface of endosomes, where it recruits and activates the Arp2/3 complex to induce actin polymerization, playing a key role in the fission of tubules that serve as transport intermediates during endosome sorting. May be involved in axonal outgrowth. Involved in cellular localization of ADRB2. Involved in cellular trafficking of BLOC-1 complex cargos such as ATP7A and VAMP7. Involved in cytokinesis and following polar body extrusion during oocyte meiotic maturation. The polypeptide is WASH complex subunit 5 (Mus musculus (Mouse)).